The primary structure comprises 469 residues: Ribulose bisphosphate carboxylase large chain (469 aa).

Lys-8 is modified (N6,N6,N6-trimethyllysine). Asn-117 and Thr-167 together coordinate substrate. The Proton acceptor role is filled by Lys-169. A substrate-binding site is contributed by Lys-171. The Mg(2+) site is built by Lys-195, Asp-197, and Glu-198. Lys-195 is modified (N6-carboxylysine). The Proton acceptor role is filled by His-288. Substrate is bound by residues Arg-289, His-321, and Ser-373.

Belongs to the RuBisCO large chain family. Type I subfamily. In terms of assembly, heterohexadecamer of 8 large chains and 8 small chains; disulfide-linked. The disulfide link is formed within the large subunit homodimers. Requires Mg(2+) as cofactor. Post-translationally, the disulfide bond which can form in the large chain dimeric partners within the hexadecamer appears to be associated with oxidative stress and protein turnover.

Its subcellular location is the plastid. It localises to the chloroplast. It carries out the reaction 2 (2R)-3-phosphoglycerate + 2 H(+) = D-ribulose 1,5-bisphosphate + CO2 + H2O. It catalyses the reaction D-ribulose 1,5-bisphosphate + O2 = 2-phosphoglycolate + (2R)-3-phosphoglycerate + 2 H(+). Its function is as follows. RuBisCO catalyzes two reactions: the carboxylation of D-ribulose 1,5-bisphosphate, the primary event in carbon dioxide fixation, as well as the oxidative fragmentation of the pentose substrate in the photorespiration process. Both reactions occur simultaneously and in competition at the same active site. In Coleonema pulchellum (Confetti bush), this protein is Ribulose bisphosphate carboxylase large chain.